We begin with the raw amino-acid sequence, 204 residues long: Urease accessory protein UreG (204 aa).

Residue glycine 12–threonine 19 participates in GTP binding.

It belongs to the SIMIBI class G3E GTPase family. UreG subfamily. In terms of assembly, homodimer. UreD, UreF and UreG form a complex that acts as a GTP-hydrolysis-dependent molecular chaperone, activating the urease apoprotein by helping to assemble the nickel containing metallocenter of UreC. The UreE protein probably delivers the nickel.

Its subcellular location is the cytoplasm. Facilitates the functional incorporation of the urease nickel metallocenter. This process requires GTP hydrolysis, probably effectuated by UreG. This chain is Urease accessory protein UreG, found in Pseudomonas paraeruginosa (strain DSM 24068 / PA7) (Pseudomonas aeruginosa (strain PA7)).